The following is a 208-amino-acid chain: Small ribosomal subunit protein uS4 (208 aa).

The disordered stretch occupies residues 30-49; it reads EKRPYAPGEHGRDRRRTESD. Residues 95-161 enclose the S4 RNA-binding domain; that stretch reads TRLDNLVLRA…VPFQIAAEGV (67 aa).

Belongs to the universal ribosomal protein uS4 family. Part of the 30S ribosomal subunit. Contacts protein S5. The interaction surface between S4 and S5 is involved in control of translational fidelity.

Functionally, one of the primary rRNA binding proteins, it binds directly to 16S rRNA where it nucleates assembly of the body of the 30S subunit. With S5 and S12 plays an important role in translational accuracy. The protein is Small ribosomal subunit protein uS4 of Bifidobacterium longum (strain DJO10A).